We begin with the raw amino-acid sequence, 73 residues long: Large ribosomal subunit protein bL31 (73 aa).

This sequence belongs to the bacterial ribosomal protein bL31 family. Type A subfamily. In terms of assembly, part of the 50S ribosomal subunit.

Functionally, binds the 23S rRNA. This chain is Large ribosomal subunit protein bL31, found in Rhizobium etli (strain CIAT 652).